A 188-amino-acid polypeptide reads, in one-letter code: Photosystem I assembly protein Ycf4 (188 aa).

Helical transmembrane passes span 26-46 and 70-90; these read YFWA…GLSS and LLFY…SLLW.

It belongs to the Ycf4 family.

Its subcellular location is the cellular thylakoid membrane. In terms of biological role, seems to be required for the assembly of the photosystem I complex. This chain is Photosystem I assembly protein Ycf4, found in Microcystis aeruginosa (strain NIES-843 / IAM M-2473).